The sequence spans 281 residues: Bifunctional protein FolD (281 aa).

NADP(+) contacts are provided by residues 164–166 (GRS), serine 189, and isoleucine 230.

Belongs to the tetrahydrofolate dehydrogenase/cyclohydrolase family. In terms of assembly, homodimer.

It carries out the reaction (6R)-5,10-methylene-5,6,7,8-tetrahydrofolate + NADP(+) = (6R)-5,10-methenyltetrahydrofolate + NADPH. It catalyses the reaction (6R)-5,10-methenyltetrahydrofolate + H2O = (6R)-10-formyltetrahydrofolate + H(+). Its pathway is one-carbon metabolism; tetrahydrofolate interconversion. In terms of biological role, catalyzes the oxidation of 5,10-methylenetetrahydrofolate to 5,10-methenyltetrahydrofolate and then the hydrolysis of 5,10-methenyltetrahydrofolate to 10-formyltetrahydrofolate. The protein is Bifunctional protein FolD of Pelagibacter ubique (strain HTCC1062).